Here is a 461-residue protein sequence, read N- to C-terminus: Photosystem II CP43 reaction center protein (461 aa).

Positions 1–2 (ME) are excised as a propeptide. An N-acetylthreonine modification is found at threonine 3. Threonine 3 is subject to Phosphothreonine. A run of 5 helical transmembrane segments spans residues 57-81 (LFEVAHFIPEKPMYEQGLILLPHLA), 122-143 (IIGPEVLEESFPFFGYDWKDKN), 166-188 (KAMFFGGVYDTWAPGGGDVRVIS), 243-263 (KPFSWARRALVWSGEAYLSYS), and 279-300 (WFNNTAYPSEFFGPTGPEASQA). A [CaMn4O5] cluster-binding site is contributed by glutamate 355. A helical transmembrane segment spans residues 435 to 459 (RARAASGGFEKGLDRENEPVLSMKL).

The protein belongs to the PsbB/PsbC family. PsbC subfamily. PSII is composed of 1 copy each of membrane proteins PsbA, PsbB, PsbC, PsbD, PsbE, PsbF, PsbH, PsbI, PsbJ, PsbK, PsbL, PsbM, PsbT, PsbX, PsbY, PsbZ, Psb30/Ycf12, at least 3 peripheral proteins of the oxygen-evolving complex and a large number of cofactors. It forms dimeric complexes. Requires Binds multiple chlorophylls and provides some of the ligands for the Ca-4Mn-5O cluster of the oxygen-evolving complex. It may also provide a ligand for a Cl- that is required for oxygen evolution. PSII binds additional chlorophylls, carotenoids and specific lipids. as cofactor.

It localises to the plastid. Its subcellular location is the cyanelle thylakoid membrane. Functionally, one of the components of the core complex of photosystem II (PSII). It binds chlorophyll and helps catalyze the primary light-induced photochemical processes of PSII. PSII is a light-driven water:plastoquinone oxidoreductase, using light energy to abstract electrons from H(2)O, generating O(2) and a proton gradient subsequently used for ATP formation. This is Photosystem II CP43 reaction center protein from Cyanophora paradoxa.